Reading from the N-terminus, the 611-residue chain is Polyphenol oxidase 4 (611 aa).

Residues histidine 57, histidine 82, histidine 91, histidine 251, histidine 255, and histidine 283 each contribute to the Cu cation site. Residues 80-82 constitute a cross-link (2'-(S-cysteinyl)-histidine (Cys-His)); sequence CTH. Histidine 255 provides a ligand contact to substrate. Residues 380-611 constitute a propeptide, removed in mature form; the sequence is IKKSEGGKNP…GGLGALGRIF (232 aa).

Belongs to the tyrosinase family. As to quaternary structure, heterotetramer. It depends on Cu(2+) as a cofactor. In terms of processing, the C-ter is probably cleaved after Gly-379 since the mature active protein is smaller than the protein encoded by the gene.

The catalysed reaction is 2 L-dopa + O2 = 2 L-dopaquinone + 2 H2O. It catalyses the reaction L-tyrosine + O2 = L-dopaquinone + H2O. Copper-containing oxidase that catalyzes both the o-hydroxylation of monophenols and the subsequent oxidation of the resulting o-diphenols into reactive o-quinones, which evolve spontaneously to produce intermediates, which associate in dark brown pigments. Involved in the initial step of melanin synthesis. Melanins constitute a mechanism of defense and resistance to stress such as UV radiations, free radicals, gamma rays, dehydratation and extreme temperatures, and contribute to the fungal cell-wall resistance against hydrolytic enzymes in avoiding cellular lysis. Fungal pigments are also involved in the formation and stability of spores. The polypeptide is Polyphenol oxidase 4 (PPO4) (Agaricus bisporus (White button mushroom)).